The primary structure comprises 272 residues: Glutamate racemase (272 aa).

Residues 9–10 (DS) and 41–42 (YG) each bind substrate. The active-site Proton donor/acceptor is the Cys73. 74–75 (NT) lines the substrate pocket. The Proton donor/acceptor role is filled by Cys183. 184-185 (TH) serves as a coordination point for substrate.

The protein belongs to the aspartate/glutamate racemases family.

It catalyses the reaction L-glutamate = D-glutamate. Its pathway is cell wall biogenesis; peptidoglycan biosynthesis. Functionally, provides the (R)-glutamate required for cell wall biosynthesis. The sequence is that of Glutamate racemase from Shewanella sp. (strain MR-4).